Reading from the N-terminus, the 288-residue chain is 4-diphosphocytidyl-2-C-methyl-D-erythritol kinase (288 aa).

Residue lysine 12 is part of the active site. Position 95–105 (95–105 (PAGGGVGGGSS)) interacts with ATP. Aspartate 137 is a catalytic residue.

This sequence belongs to the GHMP kinase family. IspE subfamily.

The enzyme catalyses 4-CDP-2-C-methyl-D-erythritol + ATP = 4-CDP-2-C-methyl-D-erythritol 2-phosphate + ADP + H(+). It functions in the pathway isoprenoid biosynthesis; isopentenyl diphosphate biosynthesis via DXP pathway; isopentenyl diphosphate from 1-deoxy-D-xylulose 5-phosphate: step 3/6. Functionally, catalyzes the phosphorylation of the position 2 hydroxy group of 4-diphosphocytidyl-2C-methyl-D-erythritol. The chain is 4-diphosphocytidyl-2-C-methyl-D-erythritol kinase from Halorhodospira halophila (strain DSM 244 / SL1) (Ectothiorhodospira halophila (strain DSM 244 / SL1)).